Consider the following 541-residue polypeptide: Exopolysaccharide phosphotransferase SCO6021 (541 aa).

The protein belongs to the stealth family.

The sequence is that of Exopolysaccharide phosphotransferase SCO6021 from Streptomyces coelicolor (strain ATCC BAA-471 / A3(2) / M145).